A 569-amino-acid chain; its full sequence is uncharacterized protein (569 aa).

Residues 1–22 form the signal peptide; that stretch reads MSLLVKAALILKCASMLQGVSA. The interval 498–541 is disordered; it reads RETSILDSTNTTSTNATNTTTTTSSSSTASSSASASSSTSATSG. A compositionally biased stretch (low complexity) spans 505–540; sequence STNTTSTNATNTTTTTSSSSTASSSASASSSTSATS.

The protein localises to the secreted. The protein resides in the cell surface. This is an uncharacterized protein from Schizosaccharomyces pombe (strain 972 / ATCC 24843) (Fission yeast).